The chain runs to 94 residues: Large ribosomal subunit protein bL27 (94 aa).

Residues 1–10 (MQFLFNIQLF) constitute a propeptide that is removed on maturation.

This sequence belongs to the bacterial ribosomal protein bL27 family. In terms of processing, the N-terminus is cleaved by ribosomal processing cysteine protease Prp.

This is Large ribosomal subunit protein bL27 from Fusobacterium nucleatum subsp. nucleatum (strain ATCC 25586 / DSM 15643 / BCRC 10681 / CIP 101130 / JCM 8532 / KCTC 2640 / LMG 13131 / VPI 4355).